We begin with the raw amino-acid sequence, 687 residues long: Putative pentatricopeptide repeat-containing protein At3g15930 (687 aa).

13 PPR repeats span residues 98–132, 133–168, 169–199, 200–234, 235–269, 270–304, 305–331, 332–366, 367–401, 402–432, 433–467, 468–498, and 504–534; these read DVVV…GVTP, DSHT…GLGS, NLYV…RCKE, DVFS…LVSP, TSVT…KTEP, SLRL…DVIS, WTSI…MPVR, DRIS…GMIP, DEFT…KIKN, DVVV…MDQR, DKFT…SIQP, DDIT…MRSD, and SLVH…MPMN. The type E motif stretch occupies residues 539-614; that stretch reads VWGALLGASR…TPGFSLIEVN (76 aa). The segment at 615–645 is type E(+) motif; sequence GFAHEFVAGDKSHLQSEEIYMKLEELAQEST.

The protein belongs to the PPR family. PCMP-E subfamily.

The polypeptide is Putative pentatricopeptide repeat-containing protein At3g15930 (PCMP-E51) (Arabidopsis thaliana (Mouse-ear cress)).